The primary structure comprises 467 residues: UDP-N-acetylmuramate--L-alanine ligase (467 aa).

Position 112-118 (112-118 (GTHGKTT)) interacts with ATP.

This sequence belongs to the MurCDEF family.

The protein resides in the cytoplasm. It catalyses the reaction UDP-N-acetyl-alpha-D-muramate + L-alanine + ATP = UDP-N-acetyl-alpha-D-muramoyl-L-alanine + ADP + phosphate + H(+). The protein operates within cell wall biogenesis; peptidoglycan biosynthesis. Cell wall formation. This chain is UDP-N-acetylmuramate--L-alanine ligase, found in Polaromonas sp. (strain JS666 / ATCC BAA-500).